The sequence spans 504 residues: Catalase (504 aa).

The signal sequence occupies residues 1–21 (MQMSKSFLLITVGLASTSLQA). Active-site residues include histidine 72 and asparagine 145. Tyrosine 353 is a binding site for heme.

This sequence belongs to the catalase family. Heme serves as cofactor.

Its subcellular location is the periplasm. The enzyme catalyses 2 H2O2 = O2 + 2 H2O. Functionally, decomposes hydrogen peroxide into water and oxygen; serves to protect cells from the toxic effects of hydrogen peroxide. This Vibrio parahaemolyticus serotype O3:K6 (strain RIMD 2210633) protein is Catalase.